A 72-amino-acid polypeptide reads, in one-letter code: V-type proton ATPase subunit e (72 aa).

At 1–2 (MS) the chain is on the lumenal side. A helical transmembrane segment spans residues 3–23 (FYTVVATFLSVVLASAVFWVL). Residues 24–34 (APKENQTVWRS) are Cytoplasmic-facing. The chain crosses the membrane as a helical span at residues 35–55 (TIILSMSMMFLMWAVTYLSQL). The Lumenal portion of the chain corresponds to 56-72 (HPLVVPRRSDLRPEFAE).

Belongs to the V-ATPase e1/e2 subunit family. In terms of assembly, V-ATPase is a heteromultimeric enzyme composed of a peripheral catalytic V1 complex (components A to H) attached to an integral membrane V0 proton pore complex (components: a, c, c', c'', d, e, f and VOA1).

The protein resides in the vacuole membrane. In terms of biological role, subunit of the V0 complex of vacuolar(H+)-ATPase (V-ATPase), a multisubunit enzyme composed of a peripheral complex (V1) that hydrolyzes ATP and a membrane integral complex (V0) that translocates protons. V-ATPase is responsible for acidifying and maintaining the pH of intracellular compartments. The sequence is that of V-type proton ATPase subunit e (VMA9) from Eremothecium gossypii (strain ATCC 10895 / CBS 109.51 / FGSC 9923 / NRRL Y-1056) (Yeast).